The following is a 183-amino-acid chain: Protein jagunal homolog 1 (183 aa).

Topologically, residues 1–39 (MASRAGPRAAGTDGSDFQHRERVAMHYQMSVTLKYEIKK) are cytoplasmic. S3 carries the phosphoserine modification. The chain crosses the membrane as a helical span at residues 40 to 60 (LIYVHLVIWLLLVAKMSVGHL). Residues 61-71 (RLLSHDQVAMP) are Lumenal-facing. The helical transmembrane segment at 72–92 (YQWEYPYLLSVVPSLLGLLSF) threads the bilayer. Residues 93–96 (PRNN) lie on the Cytoplasmic side of the membrane. A helical membrane pass occupies residues 97–117 (ISYLVLSMISMGLFSIAPLIY). At 118–137 (GSMEMFPAAQQLYRHGKAYR) the chain is on the lumenal side. Residues 138 to 158 (FLFGFSAVSVMYLVLVLAVQV) traverse the membrane as a helical segment. At 159–183 (HAWQLYYSKKLLDSWFTSTQEKKRK) the chain is on the cytoplasmic side.

This sequence belongs to the jagunal family. Interacts with COPA, COPB2 and COPG2.

The protein localises to the endoplasmic reticulum membrane. Its function is as follows. Endoplasmic reticulum transmembrane protein involved in vesicle-mediated transport, which is required for neutrophil function. Required for vesicle-mediated transport; it is however unclear whether it is involved in early secretory pathway or intracellular protein transport. Acts as a regulator of neutrophil function, probably via its role in vesicle-mediated transport: required for defense against fungal pathogens and for granulocyte colony-stimulating factor (GM-CSF) signaling pathway; possibly by regulating glycosylation and/or targeting of proteins contributing to the viability and migration of neutrophils. The protein is Protein jagunal homolog 1 (JAGN1) of Bos taurus (Bovine).